Consider the following 522-residue polypeptide: Flavin-dependent halogenase armH1 (522 aa).

Positions 16, 19, and 49 each coordinate FAD. Chloride-binding residues include Ser328 and Gly329. Ile330 provides a ligand contact to FAD.

Belongs to the flavin-dependent halogenase family.

It catalyses the reaction melleolide F + FADH2 + chloride + O2 = 6'-chloromelleolide F + FAD + 2 H2O + H(+). Functionally, flavin-dependent halogenase involved in the biosynthesis of melleolides, a range of antifungal and phytotoxic polyketide derivatives composed of an orsellinic acid (OA) moiety esterified to various sesquiterpene alcohols. The halogenase catalyzes the transfer of a single chlorine atom to the melleolide backbone, resulting in a 6'-chloromelleolide product. The enzyme acts on free substrate and does not depend on carrier-protein-dependent acceptor molecules. The sequence is that of Flavin-dependent halogenase armH1 from Armillaria mellea (Honey mushroom).